A 47-amino-acid polypeptide reads, in one-letter code: Zinc-finger protein TK0143 (47 aa).

The C2H2-type zinc-finger motif lies at 18-41 (FRCPRCGMVFRSAKAYTRHVNKAH). Cysteine 20, cysteine 23, histidine 36, and histidine 41 together coordinate Zn(2+).

In terms of assembly, crystallized in association with 70S ribosomes. It depends on Zn(2+) as a cofactor.

The sequence is that of Zinc-finger protein TK0143 from Thermococcus kodakarensis (strain ATCC BAA-918 / JCM 12380 / KOD1) (Pyrococcus kodakaraensis (strain KOD1)).